The sequence spans 577 residues: Arginine--tRNA ligase (577 aa).

Positions 122 to 132 (PNVAKEMHVGH) match the 'HIGH' region motif.

Belongs to the class-I aminoacyl-tRNA synthetase family. As to quaternary structure, monomer.

It is found in the cytoplasm. The enzyme catalyses tRNA(Arg) + L-arginine + ATP = L-arginyl-tRNA(Arg) + AMP + diphosphate. This Salmonella dublin (strain CT_02021853) protein is Arginine--tRNA ligase.